The primary structure comprises 1125 residues: Tudor domain-containing protein 7 (1125 aa).

The 74-residue stretch at 3–76 folds into the HTH OST-type 1 domain; the sequence is EADLVSKMLR…SGEITCYAMA (74 aa). Residues 126–157 form a disordered region; sequence PGFSSDFSVSKKPNPTLLRDKGNSLGVKSDAE. A compositionally biased stretch (polar residues) spans 127 to 138; that stretch reads GFSSDFSVSKKP. One can recognise an HTH OST-type 2 domain in the interval 260-329; it reads KMDEVQNRIK…GQDLLLYPAK (70 aa). The residue at position 346 (serine 346) is a Phosphoserine. An HTH OST-type 3 domain is found at 364 to 433; that stretch reads MPGDFKEKVA…PQKAILYAKL (70 aa). 2 consecutive Tudor domains span residues 540-597 and 730-787; these read TVHV…FCSL and LPFC…FLQE. Positions 881-895 are enriched in low complexity; that stretch reads SSGTSSPNSKSGSTP. Positions 881-904 are disordered; the sequence is SSGTSSPNSKSGSTPVPGSTGDNF. The residue at position 886 (serine 886) is a Phosphoserine. Residues 888-1125 are interaction with CDK17; that stretch reads NSKSGSTPVP…EYLVELSKVN (238 aa). An interaction with CABLES1 region spans residues 920–1125; it reads TSSLSVEELP…EYLVELSKVN (206 aa).

This sequence belongs to the TDRD7 family. As to quaternary structure, found in a mRNP complex, at least composed of TDRD1, TDRD6, TDRD7 and DDX4. Found in a complex containing CABLES1, CDK16 and CDK17. Interacts with CABLES1, CDK17 and PIWIL1.

It is found in the cytoplasm. Functionally, component of specific cytoplasmic RNA granules involved in post-transcriptional regulation of specific genes: probably acts by binding to specific mRNAs and regulating their translation. Required for lens transparency during lens development, by regulating translation of genes such as CRYBB3 and HSPB1 in the developing lens. Also required during spermatogenesis. The polypeptide is Tudor domain-containing protein 7 (TDRD7) (Canis lupus familiaris (Dog)).